We begin with the raw amino-acid sequence, 311 residues long: Homoserine kinase (311 aa).

96 to 106 (PLARGLGSSAA) is an ATP binding site.

The protein belongs to the GHMP kinase family. Homoserine kinase subfamily.

The protein resides in the cytoplasm. The catalysed reaction is L-homoserine + ATP = O-phospho-L-homoserine + ADP + H(+). It participates in amino-acid biosynthesis; L-threonine biosynthesis; L-threonine from L-aspartate: step 4/5. Catalyzes the ATP-dependent phosphorylation of L-homoserine to L-homoserine phosphate. The polypeptide is Homoserine kinase (Natranaerobius thermophilus (strain ATCC BAA-1301 / DSM 18059 / JW/NM-WN-LF)).